We begin with the raw amino-acid sequence, 368 residues long: Agmatine deiminase (368 aa).

Cys-357 functions as the Amidino-cysteine intermediate in the catalytic mechanism.

This sequence belongs to the agmatine deiminase family. Homodimer.

It carries out the reaction agmatine + H2O = N-carbamoylputrescine + NH4(+). It participates in amine and polyamine biosynthesis; putrescine biosynthesis via agmatine pathway; N-carbamoylputrescine from agmatine: step 1/1. Functionally, mediates the hydrolysis of agmatine into N-carbamoylputrescine in the arginine decarboxylase (ADC) pathway of putrescine biosynthesis, a basic polyamine. This Pseudomonas aeruginosa (strain LESB58) protein is Agmatine deiminase.